The chain runs to 230 residues: Ribonuclease HII (230 aa).

The region spanning 28 to 217 (FRIAGIDEAG…VKEHLPSQPD (190 aa)) is the RNase H type-2 domain. A divalent metal cation is bound by residues Asp34, Glu35, and Asp126. Residues 209 to 230 (KEHLPSQPDSDTAGPSTGLFSF) form a disordered region. A compositionally biased stretch (polar residues) spans 215–230 (QPDSDTAGPSTGLFSF).

This sequence belongs to the RNase HII family. Mn(2+) is required as a cofactor. Requires Mg(2+) as cofactor.

Its subcellular location is the cytoplasm. The enzyme catalyses Endonucleolytic cleavage to 5'-phosphomonoester.. Its function is as follows. Endonuclease that specifically degrades the RNA of RNA-DNA hybrids. In Citrifermentans bemidjiense (strain ATCC BAA-1014 / DSM 16622 / JCM 12645 / Bem) (Geobacter bemidjiensis), this protein is Ribonuclease HII.